A 685-amino-acid chain; its full sequence is Translation initiation factor IF-2 (685 aa).

Positions 60–79 (ISLAKTREPSKEKTEAKKPP) are disordered. Residues 64–79 (KTREPSKEKTEAKKPP) are compositionally biased toward basic and acidic residues. A tr-type G domain is found at 175 to 352 (NRPPVVTVMG…DIRCIPDSPV (178 aa)). A G1 region spans residues 184–191 (GHVDHGKT). Residue 184–191 (GHVDHGKT) coordinates GTP. A G2 region spans residues 209-213 (GITQS). The segment at 230 to 233 (DTPG) is G3. GTP is bound by residues 230-234 (DTPGH) and 284-287 (NKID). Residues 284–287 (NKID) are G4. The tract at residues 321–323 (SAR) is G5.

Belongs to the TRAFAC class translation factor GTPase superfamily. Classic translation factor GTPase family. IF-2 subfamily.

It localises to the cytoplasm. Its function is as follows. One of the essential components for the initiation of protein synthesis. Protects formylmethionyl-tRNA from spontaneous hydrolysis and promotes its binding to the 30S ribosomal subunits. Also involved in the hydrolysis of GTP during the formation of the 70S ribosomal complex. The chain is Translation initiation factor IF-2 from Fervidobacterium nodosum (strain ATCC 35602 / DSM 5306 / Rt17-B1).